The primary structure comprises 172 residues: Putative phosphoesterase Bcer98_0945 (172 aa).

His34 acts as the Proton donor in catalysis. Short sequence motifs (HXTX) lie at residues 34–37 and 115–118; these read HITL and HLTI. Catalysis depends on His115, which acts as the Proton acceptor.

It belongs to the 2H phosphoesterase superfamily. YjcG family.

The sequence is that of Putative phosphoesterase Bcer98_0945 from Bacillus cytotoxicus (strain DSM 22905 / CIP 110041 / 391-98 / NVH 391-98).